A 461-amino-acid polypeptide reads, in one-letter code: Serine/threonine-protein kinase 4 homolog A (461 aa).

Positions 20–273 (FTIVEKLGEG…AEELLKHPFI (254 aa)) constitute a Protein kinase domain. Residues 26–34 (LGEGSYGSV) and lysine 49 contribute to the ATP site. Aspartate 139 acts as the Proton acceptor in catalysis. A Phosphothreonine; by autocatalysis modification is found at threonine 173. 2 disordered regions span residues 303-349 (GIEQ…EEYD) and 369-388 (NDDE…SNKK). Residues 307–322 (RDEEEEDEDEDSEDSD) show a composition bias toward acidic residues. Positions 411–458 (SDKYSSYSLEELKKMLAELEIEREKEVQKTLEKFSINRQALLAVIDEK) constitute an SARAH domain.

The protein belongs to the protein kinase superfamily. STE Ser/Thr protein kinase family. STE20 subfamily. Mn(2+) serves as cofactor. Post-translationally, undergoes autophosphorylation in the catalytic domain.

It is found in the cytoplasm. The protein localises to the cytosol. It catalyses the reaction L-seryl-[protein] + ATP = O-phospho-L-seryl-[protein] + ADP + H(+). It carries out the reaction L-threonyl-[protein] + ATP = O-phospho-L-threonyl-[protein] + ADP + H(+). In terms of biological role, regulates both cAMP signaling during early development and the stress response. Functions as an activator of adenylylcyclase. The polypeptide is Serine/threonine-protein kinase 4 homolog A (krsA) (Dictyostelium discoideum (Social amoeba)).